The chain runs to 79 residues: Acyl carrier protein (79 aa).

The Carrier domain occupies 2–77 (ENIEQRVKKI…QAIDYVTAHL (76 aa)). Serine 37 carries the post-translational modification O-(pantetheine 4'-phosphoryl)serine.

Belongs to the acyl carrier protein (ACP) family. 4'-phosphopantetheine is transferred from CoA to a specific serine of apo-ACP by AcpS. This modification is essential for activity because fatty acids are bound in thioester linkage to the sulfhydryl of the prosthetic group.

The protein resides in the cytoplasm. It participates in lipid metabolism; fatty acid biosynthesis. In terms of biological role, carrier of the growing fatty acid chain in fatty acid biosynthesis. This Laribacter hongkongensis (strain HLHK9) protein is Acyl carrier protein.